The chain runs to 149 residues: Deoxyuridine 5'-triphosphate nucleotidohydrolase (149 aa).

Residues 70–72 (RSG), N83, and 87–89 (LID) each bind substrate.

The protein belongs to the dUTPase family. It depends on Mg(2+) as a cofactor.

It catalyses the reaction dUTP + H2O = dUMP + diphosphate + H(+). It participates in pyrimidine metabolism; dUMP biosynthesis; dUMP from dCTP (dUTP route): step 2/2. This enzyme is involved in nucleotide metabolism: it produces dUMP, the immediate precursor of thymidine nucleotides and it decreases the intracellular concentration of dUTP so that uracil cannot be incorporated into DNA. This is Deoxyuridine 5'-triphosphate nucleotidohydrolase from Blochmanniella pennsylvanica (strain BPEN).